Consider the following 91-residue polypeptide: Putative pterin-4-alpha-carbinolamine dehydratase (91 aa).

Belongs to the pterin-4-alpha-carbinolamine dehydratase family.

It catalyses the reaction (4aS,6R)-4a-hydroxy-L-erythro-5,6,7,8-tetrahydrobiopterin = (6R)-L-erythro-6,7-dihydrobiopterin + H2O. The protein is Putative pterin-4-alpha-carbinolamine dehydratase of Sulfolobus acidocaldarius (strain ATCC 33909 / DSM 639 / JCM 8929 / NBRC 15157 / NCIMB 11770).